We begin with the raw amino-acid sequence, 442 residues long: Protein bangles and beads (442 aa).

Residues 47-442 (AVEPAPLKPE…SEESSESKEN (396 aa)) form a disordered region. Composition is skewed to basic and acidic residues over residues 55 to 67 (PEAE…KTIE), 114 to 125 (PEKKTLPEEAKP), and 133 to 146 (EAEK…RTEA). The span at 159–172 (AIEQAPEAPAANAE) shows a compositional bias: low complexity. 2 stretches are compositionally biased toward basic and acidic residues: residues 177–194 (VVDE…KSAE) and 204–240 (AEKE…EPAK). 2 stretches are compositionally biased toward low complexity: residues 241–255 (AAEA…AATK) and 272–288 (SSPA…AAQA). The segment covering 329–339 (EAVKEQEKEQP) has biased composition (basic and acidic residues). Low complexity predominate over residues 357–376 (TAAPAGAPEPTAAVAPAAVP). The span at 408-442 (EPKKSSEEKSDKSESKVDESSESKESEESSESKEN) shows a compositional bias: basic and acidic residues. A phosphoserine mark is found at S430, S433, S436, and S437.

As to expression, expressed in the embryonic CNS, in sets of cells that are segmentally reiterated along the periphery of the nervous system.

May play an important role during development. In Drosophila melanogaster (Fruit fly), this protein is Protein bangles and beads (bnb).